An 82-amino-acid polypeptide reads, in one-letter code: Penaeidin-3b (82 aa).

The signal sequence occupies residues 1 to 19 (MRLVVCLVFLASFALVCQG). Gln20 is modified (pyrrolidone carboxylic acid). Cystine bridges form between Cys51/Cys66, Cys55/Cys73, and Cys67/Cys74. Ser81 bears the Serine amide mark.

Belongs to the penaeidin family. Higher expression in hemocytes and to a lesser extent in heart, testis, gills, intestine, lymphoid organ and hepatopancreas. Traces in eyes and subcuticular epithelium. Not present in the brain.

It is found in the cytoplasmic granule. In terms of biological role, antibacterial activity against M.luteus and E.coli bacteria. Antifungal activity against N.crassa and F.oxysporum. Presents chitin-binding activity. The polypeptide is Penaeidin-3b (Penaeus vannamei (Whiteleg shrimp)).